Reading from the N-terminus, the 409-residue chain is uncharacterized protein (409 aa).

The next 12 helical transmembrane spans lie at Ile-3–Glu-23, Ile-43–Gly-63, Pro-73–Val-93, Ile-95–Ile-115, Ile-135–Ile-155, Tyr-162–Leu-182, Ile-209–Ile-229, Lys-248–Ile-268, Phe-283–Ile-303, Leu-309–Ile-329, Thr-346–Val-366, and Leu-379–Tyr-399.

Belongs to the major facilitator superfamily. Bcr/CmlA family.

It is found in the cell inner membrane. This is an uncharacterized protein from Rickettsia typhi (strain ATCC VR-144 / Wilmington).